A 185-amino-acid chain; its full sequence is Ribosome-recycling factor (185 aa).

This sequence belongs to the RRF family.

Its subcellular location is the cytoplasm. Responsible for the release of ribosomes from messenger RNA at the termination of protein biosynthesis. May increase the efficiency of translation by recycling ribosomes from one round of translation to another. This is Ribosome-recycling factor from Listeria monocytogenes serovar 1/2a (strain ATCC BAA-679 / EGD-e).